Consider the following 409-residue polypeptide: Elongation factor Tu, chloroplastic (409 aa).

The tr-type G domain occupies 10-214; it reads KPHVNIGTIG…NVDSYIPTPA (205 aa). The G1 stretch occupies residues 19 to 26; that stretch reads GHVDHGKT. 19 to 26 contributes to the GTP binding site; the sequence is GHVDHGKT. Residue Thr26 coordinates Mg(2+). The interval 60 to 64 is G2; sequence GITIN. The tract at residues 81–84 is G3; the sequence is DCPG. Residues 81–85 and 136–139 each bind GTP; these read DCPGH and NKED. The G4 stretch occupies residues 136 to 139; sequence NKED. The G5 stretch occupies residues 174-176; the sequence is SAL.

It belongs to the TRAFAC class translation factor GTPase superfamily. Classic translation factor GTPase family. EF-Tu/EF-1A subfamily.

Its subcellular location is the plastid. The protein localises to the chloroplast. It carries out the reaction GTP + H2O = GDP + phosphate + H(+). GTP hydrolase that promotes the GTP-dependent binding of aminoacyl-tRNA to the A-site of ribosomes during protein biosynthesis. This chain is Elongation factor Tu, chloroplastic (tufA), found in Ostreococcus tauri.